The following is a 690-amino-acid chain: Protein hook (690 aa).

The 117-residue stretch at 6 to 122 folds into the Calponin-homology (CH) domain; sequence MEIYESLIRW…RLLQLILGCA (117 aa). 2 coiled-coil regions span residues 134–515 and 546–577; these read QIME…HHAE and ETTQ…QAAD.

This sequence belongs to the hook family. Homodimer. Interacts with microtubules via its N-terminus.

The protein resides in the cytoplasm. Its subcellular location is the cytoskeleton. The protein localises to the endosome. Functionally, involved in endocytic trafficking. Probably acts as a cytoskeletal linker protein that tethers endosome vesicles to the cytoskeleton. This chain is Protein hook, found in Anopheles gambiae (African malaria mosquito).